Consider the following 146-residue polypeptide: Putative pre-16S rRNA nuclease (146 aa).

Belongs to the YqgF nuclease family.

Its subcellular location is the cytoplasm. Could be a nuclease involved in processing of the 5'-end of pre-16S rRNA. The protein is Putative pre-16S rRNA nuclease of Burkholderia mallei (strain SAVP1).